Reading from the N-terminus, the 608-residue chain is DNA mismatch repair protein MutL (608 aa).

It belongs to the DNA mismatch repair MutL/HexB family.

This protein is involved in the repair of mismatches in DNA. It is required for dam-dependent methyl-directed DNA mismatch repair. May act as a 'molecular matchmaker', a protein that promotes the formation of a stable complex between two or more DNA-binding proteins in an ATP-dependent manner without itself being part of a final effector complex. The sequence is that of DNA mismatch repair protein MutL from Anoxybacillus flavithermus (strain DSM 21510 / WK1).